The primary structure comprises 181 residues: Shikimate kinase (181 aa).

23–28 provides a ligand contact to ATP; that stretch reads GTGKST. Residue S27 participates in Mg(2+) binding. Residues D45, R69, and G91 each contribute to the substrate site. R129 provides a ligand contact to ATP. R148 is a binding site for substrate.

This sequence belongs to the shikimate kinase family. As to quaternary structure, monomer. Mg(2+) serves as cofactor.

It is found in the cytoplasm. The catalysed reaction is shikimate + ATP = 3-phosphoshikimate + ADP + H(+). Its pathway is metabolic intermediate biosynthesis; chorismate biosynthesis; chorismate from D-erythrose 4-phosphate and phosphoenolpyruvate: step 5/7. In terms of biological role, catalyzes the specific phosphorylation of the 3-hydroxyl group of shikimic acid using ATP as a cosubstrate. This chain is Shikimate kinase, found in Geobacter sulfurreducens (strain ATCC 51573 / DSM 12127 / PCA).